Here is a 195-residue protein sequence, read N- to C-terminus: Ephrin-A2 (195 aa).

A signal peptide spans 1 to 16; it reads MELSLVVFTVVCWVSV. Residues 24–157 enclose the Ephrin RBD domain; that stretch reads SDRHAVYWNS…KLKVYVKPTS (134 aa). A glycan (N-linked (GlcNAc...) asparagine) is linked at Asn32. 2 disulfide bridges follow: Cys57–Cys97 and Cys85–Cys146. A lipid anchor (GPI-anchor amidated cysteine) is attached at Cys174. A propeptide spans 175 to 195 (removed in mature form); it reads GADGPCLAVLMLLLVFLLAGV.

This sequence belongs to the ephrin family. As to quaternary structure, binds to the receptor tyrosine kinases epha2, epha3, epha4 and epha5. Interacts with epha8; activates epha8. In terms of tissue distribution, widespread expression in the embryo.

It is found in the cell membrane. Functionally, cell surface GPI-bound ligand for Eph receptors, a family of receptor tyrosine kinases which are crucial for migration, repulsion and adhesion during neuronal, vascular and epithelial development. Binds promiscuously Eph receptors residing on adjacent cells, leading to contact-dependent bidirectional signaling into neighboring cells. The signaling pathway downstream of the receptor is referred to as forward signaling while the signaling pathway downstream of the ephrin ligand is referred to as reverse signaling. With the epha2 receptor may play a role in bone remodeling through regulation of osteoclastogenesis and osteoblastogenesis. In Danio rerio (Zebrafish), this protein is Ephrin-A2 (efna2).